We begin with the raw amino-acid sequence, 595 residues long: Actin-histidine N-methyltransferase (595 aa).

The disordered stretch occupies residues 1-22 (MGKKSRVKTQKSGTGATATVSP). The segment covering 10 to 20 (QKSGTGATATV) has biased composition (polar residues). Residues R75, 104–106 (EGF), R254, 275–279 (DMCNH), and 325–327 (SGF) contribute to the S-adenosyl-L-methionine site. The 221-residue stretch at 94–314 (EGFEMVNFKE…AGEQIYIFYG (221 aa)) folds into the SET domain. S513 is subject to Phosphoserine. The interval 552–595 (LVNGENCIPNGTRSENEDLNQEENKRAVEDAKGSSSDSTDAVKK) is disordered. The span at 573 to 583 (EENKRAVEDAK) shows a compositional bias: basic and acidic residues. Polar residues predominate over residues 584–595 (GSSSDSTDAVKK).

This sequence belongs to the class V-like SAM-binding methyltransferase superfamily. SETD3 actin-histidine methyltransferase family. In terms of assembly, interacts with MYOD1. In terms of processing, phosphorylated by GSK3B, which is required for recognition by the SCF(FBXW7) complex and subsequent degradation. Post-translationally, ubiquitinated by the SCF(FBXW7) complex following phosphorylation by GSK3B, leading to its degradation by the proteasome.

It is found in the cytoplasm. The protein resides in the nucleus. The enzyme catalyses L-histidyl-[protein] + S-adenosyl-L-methionine = N(tele)-methyl-L-histidyl-[protein] + S-adenosyl-L-homocysteine + H(+). Functionally, protein-histidine N-methyltransferase that specifically mediates 3-methylhistidine (tele-methylhistidine) methylation of actin at 'His-73'. Histidine methylation of actin is required for smooth muscle contraction of the laboring uterus during delivery. Does not have protein-lysine N-methyltransferase activity and probably only catalyzes histidine methylation of actin. The chain is Actin-histidine N-methyltransferase from Otolemur garnettii (Small-eared galago).